We begin with the raw amino-acid sequence, 158 residues long: Superoxide dismutase [Cu-Zn] (158 aa).

Cu cation contacts are provided by His-46, His-48, and His-63. A disulfide bridge connects residues Cys-57 and Cys-149. Zn(2+)-binding residues include His-63, His-71, His-80, and Asp-83. Position 120 (His-120) interacts with Cu cation.

This sequence belongs to the Cu-Zn superoxide dismutase family. Homodimer. Requires Cu cation as cofactor. It depends on Zn(2+) as a cofactor.

The protein localises to the cytoplasm. It carries out the reaction 2 superoxide + 2 H(+) = H2O2 + O2. Its function is as follows. Destroys radicals which are normally produced within the cells and which are toxic to biological systems. The sequence is that of Superoxide dismutase [Cu-Zn] (SODC) from Brugia pahangi (Filarial nematode worm).